Consider the following 269-residue polypeptide: 5'-nucleotidase SurE (269 aa).

The a divalent metal cation site is built by D11, D12, S43, and N101.

The protein belongs to the SurE nucleotidase family. Requires a divalent metal cation as cofactor.

Its subcellular location is the cytoplasm. The enzyme catalyses a ribonucleoside 5'-phosphate + H2O = a ribonucleoside + phosphate. In terms of biological role, nucleotidase that shows phosphatase activity on nucleoside 5'-monophosphates. This is 5'-nucleotidase SurE from Synechococcus sp. (strain WH7803).